A 139-amino-acid chain; its full sequence is D-ribose pyranase (139 aa).

Histidine 20 serves as the catalytic Proton donor. Substrate is bound by residues aspartate 28, histidine 106, and 128-130 (YAN).

The protein belongs to the RbsD / FucU family. RbsD subfamily. As to quaternary structure, homodecamer.

The protein localises to the cytoplasm. The enzyme catalyses beta-D-ribopyranose = beta-D-ribofuranose. It functions in the pathway carbohydrate metabolism; D-ribose degradation; D-ribose 5-phosphate from beta-D-ribopyranose: step 1/2. Its function is as follows. Catalyzes the interconversion of beta-pyran and beta-furan forms of D-ribose. This is D-ribose pyranase from Escherichia coli O45:K1 (strain S88 / ExPEC).